A 364-amino-acid polypeptide reads, in one-letter code: SVP1-like protein 2 (364 aa).

WD repeat units lie at residues 173–213 (AHDS…KICE) and 218–257 (YQHT…NTIR).

It belongs to the WD repeat PROPPIN family.

It localises to the vacuole membrane. The protein localises to the cytoplasmic vesicle membrane. Its subcellular location is the preautophagosomal structure membrane. In terms of biological role, involved in mitochondrial or peroxisomal functions and amino acid signaling pathways. The protein is SVP1-like protein 2 (hsv2) of Schizosaccharomyces pombe (strain 972 / ATCC 24843) (Fission yeast).